A 401-amino-acid chain; its full sequence is Type 3 secretion system translocon protein SctE (401 aa).

A coiled-coil region spans residues 129–160 (IQRLHEQNMKKIEENQEKIKETEENAKQVKKS). A run of 2 helical transmembrane segments spans residues 176–196 (VIVG…AMMV) and 224–244 (ILGP…TVMT). Residues 345–379 (LALNKADMAALQSIIDRLKEELSHLSESHQQVMEL) adopt a coiled-coil conformation.

Belongs to the SctE/SipB/YopB family. As to quaternary structure, the core secretion machinery of the T3SS is composed of approximately 20 different proteins, including cytoplasmic components, a base, an export apparatus and a needle. This subunit is involved in the formation of a pore, called the translocon, in host membrane. Interacts with YopD/SctB. Together with YopD/SctB, forms a multimeric integral membrane complex.

The protein localises to the secreted. It is found in the host membrane. In terms of biological role, component of the type III secretion system (T3SS), also called injectisome, which is used to inject bacterial effector proteins into eukaryotic host cells. YopB/SctE and YopD/SctB are inserted into the host membrane where they form a pore and allow the translocation of effector proteins into the cytosol of target cells. Is an essential virulence determinant. Required for YopE and YopH translocation. Shows membrane disruptive activity in vitro. Interaction with the host cell triggers a signaling response, via activation of the small GTPase Ras, the MAPK kinases ERK and JNK and the nuclear factor NF-kappa-B pathways, and production of the proinflammatory cytokine interleukin-8 (IL-8). YopB/SctE-dependent signaling response is counteracted by YopE, YopH and YopJ in infected host cells. YopB/SctE is directly responsible for signaling and its insertion in the membrane is important to activate the signaling response in the host cell. The polypeptide is Type 3 secretion system translocon protein SctE (Yersinia pseudotuberculosis serotype I (strain IP32953)).